A 430-amino-acid chain; its full sequence is Glutamate-1-semialdehyde 2,1-aminomutase (430 aa).

At Lys-265 the chain carries N6-(pyridoxal phosphate)lysine.

Belongs to the class-III pyridoxal-phosphate-dependent aminotransferase family. HemL subfamily. Homodimer. The cofactor is pyridoxal 5'-phosphate.

The protein resides in the cytoplasm. It catalyses the reaction (S)-4-amino-5-oxopentanoate = 5-aminolevulinate. Its pathway is porphyrin-containing compound metabolism; protoporphyrin-IX biosynthesis; 5-aminolevulinate from L-glutamyl-tRNA(Glu): step 2/2. This Helicobacter pylori (strain J99 / ATCC 700824) (Campylobacter pylori J99) protein is Glutamate-1-semialdehyde 2,1-aminomutase (hemL).